We begin with the raw amino-acid sequence, 344 residues long: Cell cycle control protein 50C (344 aa).

Topologically, residues 1–34 (MEETPQHCLSRLPDNSALKQQELPAHRLYFTARR) are cytoplasmic. A helical membrane pass occupies residues 35–55 (VLFVFFTTGIFCLCMGIILIL). The Extracellular portion of the chain corresponds to 56–306 (SARSTQEIEI…STLTWCGGNS (251 aa)). Asn66 and Asn261 each carry an N-linked (GlcNAc...) asparagine glycan. The helical transmembrane segment at 307-327 (LFLGLAYTVTGAITWLASFTM) threads the bilayer. At 328–344 (MAIHITLKNKQMSFFHQ) the chain is on the cytoplasmic side.

Belongs to the CDC50/LEM3 family. In terms of tissue distribution, specifically expressed in testis.

It is found in the membrane. The protein is Cell cycle control protein 50C (TMEM30C) of Macaca fascicularis (Crab-eating macaque).